We begin with the raw amino-acid sequence, 305 residues long: Glycine--tRNA ligase alpha subunit (305 aa).

It belongs to the class-II aminoacyl-tRNA synthetase family. Tetramer of two alpha and two beta subunits.

It localises to the cytoplasm. It catalyses the reaction tRNA(Gly) + glycine + ATP = glycyl-tRNA(Gly) + AMP + diphosphate. This is Glycine--tRNA ligase alpha subunit from Streptococcus pyogenes serotype M18 (strain MGAS8232).